The sequence spans 396 residues: 1-deoxy-D-xylulose 5-phosphate reductoisomerase (396 aa).

5 residues coordinate NADPH: Thr-10, Gly-11, Ser-12, Ile-13, and Asn-123. Lys-124 contributes to the 1-deoxy-D-xylulose 5-phosphate binding site. Glu-125 is an NADPH binding site. Mn(2+) is bound at residue Asp-149. 1-deoxy-D-xylulose 5-phosphate contacts are provided by Ser-150, Glu-151, Ser-185, and His-208. Glu-151 contacts Mn(2+). Gly-214 is an NADPH binding site. Residues Ser-221, Asn-226, Lys-227, and Glu-230 each contribute to the 1-deoxy-D-xylulose 5-phosphate site. Glu-230 lines the Mn(2+) pocket.

The protein belongs to the DXR family. Mg(2+) is required as a cofactor. Mn(2+) serves as cofactor.

The catalysed reaction is 2-C-methyl-D-erythritol 4-phosphate + NADP(+) = 1-deoxy-D-xylulose 5-phosphate + NADPH + H(+). Its pathway is isoprenoid biosynthesis; isopentenyl diphosphate biosynthesis via DXP pathway; isopentenyl diphosphate from 1-deoxy-D-xylulose 5-phosphate: step 1/6. Functionally, catalyzes the NADPH-dependent rearrangement and reduction of 1-deoxy-D-xylulose-5-phosphate (DXP) to 2-C-methyl-D-erythritol 4-phosphate (MEP). The sequence is that of 1-deoxy-D-xylulose 5-phosphate reductoisomerase from Shewanella sp. (strain MR-7).